The sequence spans 216 residues: Cell envelope integrity protein Cei (216 aa).

Residues 25–45 traverse the membrane as a helical segment; it reads PAIVVVAFLVVVTCVMWTLAL.

The protein resides in the cell membrane. Functionally, contributes to cell envelope integrity and virulence. In Mycobacterium tuberculosis (strain ATCC 25618 / H37Rv), this protein is Cell envelope integrity protein Cei.